The chain runs to 532 residues: Zinc finger protein 350 (532 aa).

The region spanning Ile-8–Ser-79 is the KRAB domain. C2H2-type zinc fingers lie at residues His-206–His-228, His-234–His-256, Tyr-262–His-284, Tyr-290–His-312, Tyr-318–His-340, Phe-346–His-368, Phe-374–His-396, and Tyr-402–His-424. The segment covering Glu-427–Ser-443 has biased composition (basic and acidic residues). The interval Glu-427–Pro-465 is disordered. A compositionally biased stretch (polar residues) spans Leu-445 to Pro-465.

The protein belongs to the krueppel C2H2-type zinc-finger protein family. Interacts with BRCA1. Interacts with RNF11. Widely expressed.

It localises to the nucleus. It is found in the nucleus matrix. In terms of biological role, transcriptional repressor. Binds to a specific sequence, 5'-GGGxxxCAGxxxTTT-3', within GADD45 intron 3. The sequence is that of Zinc finger protein 350 (ZNF350) from Homo sapiens (Human).